The chain runs to 854 residues: Envelope glycoprotein gp160 (854 aa).

Positions 1–20 (MGRLLIKILIIAIGISIGIG) are cleaved as a signal peptide. Topologically, residues 21-705 (NLYVTVFYGI…IILGLRFAWV (685 aa)) are extracellular. A glycan (N-linked (GlcNAc...) asparagine; by host) is linked at Asn35. An intrachain disulfide couples Cys42 to Cys55. Asn68, Asn115, Asn136, Asn153, Asn168, Asn182, and Asn199 each carry an N-linked (GlcNAc...) asparagine; by host glycan. 5 cysteine pairs are disulfide-bonded: Cys99/Cys207, Cys106/Cys198, Cys111/Cys154, Cys220/Cys250, and Cys230/Cys242. The interval 111–153 (CVELNGTATTKATTTATTTMTTPCQNCSTEQIEGEMAEEPASN) is V1. The tract at residues 154-198 (CTFAIAGYQRDVKKNYSMTWYDQELVCNNKTGSEKGSKDCYMIHC) is V2. Asn244, Asn255, Asn265, Asn271, Asn283, Asn295, Asn305, Asn355, Asn400, Asn409, Asn458, Asn472, and Asn478 each carry an N-linked (GlcNAc...) asparagine; by host glycan. The segment at 300 to 332 (CRRPGNKTVLPVTIMAGLVFHSQKYNTRLKQAW) is V3. Cys300 and Cys333 are oxidised to a cystine. 2 cysteine pairs are disulfide-bonded: Cys382-Cys457 and Cys389-Cys430. A V4 region spans residues 389-430 (CKMDWFINYLNNRTEDAEGTNRTCDKGKPGPGPCVQRTYVAC). Residues 473 to 481 (KSGPINVTL) are V5. Residues 523–543 (VPFVLGFLGFLGAAGTAMGAA) are fusion peptide. The immunosuppression stretch occupies residues 586 to 602 (LNARVTALEKYLEDQAR). N-linked (GlcNAc...) asparagine; by host glycosylation is found at Asn630 and Asn646. A coiled-coil region spans residues 633–672 (WLEWERQINALEGNITQLLEEAQNQESKNLDLYQKLDDWS). The tract at residues 667–688 (KLDDWSGFWSWFSLSTWLGYVK) is MPER; binding to GalCer. Residues 706-726 (LWGCIRNIRQGYNPLPQIHIH) form a helical membrane-spanning segment. Residues 717-720 (YNPL) carry the YXXL motif; contains endocytosis signal motif. Over 727–854 (SSAERPDNGG…VRQGLEKVLG (128 aa)) the chain is Cytoplasmic.

The mature envelope protein (Env) consists of a homotrimer of non-covalently associated gp120-gp41 heterodimers. The resulting complex protrudes from the virus surface as a spike. Interacts with host CD4 and CCR5. Gp120 also interacts with the C-type lectins CD209/DC-SIGN and CLEC4M/DC-SIGNR (collectively referred to as DC-SIGN(R)). In terms of assembly, the mature envelope protein (Env) consists of a homotrimer of non-covalently associated gp120-gp41 heterodimers. The resulting complex protrudes from the virus surface as a spike. In terms of processing, specific enzymatic cleavages in vivo yield mature proteins. Envelope glycoproteins are synthesized as an inactive precursor that is heavily N-glycosylated and processed likely by host cell furin in the Golgi to yield the mature SU and TM proteins. The cleavage site between SU and TM requires the minimal sequence [KR]-X-[KR]-R.

The protein resides in the virion membrane. Its subcellular location is the host cell membrane. It is found in the host endosome membrane. Functionally, the surface protein gp120 (SU) attaches the virus to the host lymphoid cell by binding to the primary receptor CD4. This interaction induces a structural rearrangement creating a high affinity binding site for a chemokine coreceptor like CCR5. This peculiar 2 stage receptor-interaction strategy allows gp120 to maintain the highly conserved coreceptor-binding site in a cryptic conformation, protected from neutralizing antibodies. These changes are transmitted to the transmembrane protein gp41 and are thought to activate its fusogenic potential by unmasking its fusion peptide. In terms of biological role, surface protein gp120 (SU) may target the virus to gut-associated lymphoid tissue (GALT) by binding host ITGA4/ITGB7 (alpha-4/beta-7 integrins), a complex that mediates T-cell migration to the GALT. Interaction between gp120 and ITGA4/ITGB7 would allow the virus to enter GALT early in the infection, infecting and killing most of GALT's resting CD4+ T-cells. This T-cell depletion is believed to be the major insult to the host immune system leading to AIDS. Its function is as follows. The surface protein gp120 is a ligand for CD209/DC-SIGN and CLEC4M/DC-SIGNR, which are respectively found on dendritic cells (DCs), and on endothelial cells of liver sinusoids and lymph node sinuses. These interactions allow capture of viral particles at mucosal surfaces by these cells and subsequent transmission to permissive cells. DCs are professional antigen presenting cells, critical for host immunity by inducing specific immune responses against a broad variety of pathogens. They act as sentinels in various tissues where they take up antigen, process it, and present it to T-cells following migration to lymphoid organs. SIV subverts the migration properties of dendritic cells to gain access to CD4+ T-cells in lymph nodes. Virus transmission to permissive T-cells occurs either in trans (without DCs infection, through viral capture and transmission), or in cis (following DCs productive infection, through the usual CD4-gp120 interaction), thereby inducing a robust infection. In trans infection, bound virions remain infectious over days and it is proposed that they are not degraded, but protected in non-lysosomal acidic organelles within the DCs close to the cell membrane thus contributing to the viral infectious potential during DCs' migration from the periphery to the lymphoid tissues. On arrival at lymphoid tissues, intact virions recycle back to DCs' cell surface allowing virus transmission to CD4+ T-cells. Virion capture also seems to lead to MHC-II-restricted viral antigen presentation, and probably to the activation of SIV-specific CD4+ cells. The transmembrane protein gp41 (TM) acts as a class I viral fusion protein. Under the current model, the protein has at least 3 conformational states: pre-fusion native state, pre-hairpin intermediate state, and post-fusion hairpin state. During fusion of viral and target intracellular membranes, the coiled coil regions (heptad repeats) assume a trimer-of-hairpins structure, positioning the fusion peptide in close proximity to the C-terminal region of the ectodomain. The formation of this structure appears to drive apposition and subsequent fusion of viral and target cell membranes. Complete fusion occurs in host cell endosomes. The virus undergoes clathrin-dependent internalization long before endosomal fusion, thus minimizing the surface exposure of conserved viral epitopes during fusion and reducing the efficacy of inhibitors targeting these epitopes. Membranes fusion leads to delivery of the nucleocapsid into the cytoplasm. Functionally, the envelope glycoprotein gp160 precursor down-modulates cell surface CD4 antigen by interacting with it in the endoplasmic reticulum and blocking its transport to the cell surface. In terms of biological role, the gp120-gp41 heterodimer allows rapid transcytosis of the virus through CD4 negative cells such as simple epithelial monolayers of the intestinal, rectal and endocervical epithelial barriers. Both gp120 and gp41 specifically recognize glycosphingolipids galactosyl-ceramide (GalCer) or 3' sulfo-galactosyl-ceramide (GalS) present in the lipid rafts structures of epithelial cells. Binding to these alternative receptors allows the rapid transcytosis of the virus through the epithelial cells. This transcytotic vesicle-mediated transport of virions from the apical side to the basolateral side of the epithelial cells does not involve infection of the cells themselves. This chain is Envelope glycoprotein gp160 (env), found in Cercopithecidae (Old World monkeys).